The primary structure comprises 146 residues: Holo-[acyl-carrier-protein] synthase (146 aa).

Mg(2+) is bound by residues Asp9 and Glu63.

The protein belongs to the P-Pant transferase superfamily. AcpS family. Mg(2+) is required as a cofactor.

The protein resides in the cytoplasm. The catalysed reaction is apo-[ACP] + CoA = holo-[ACP] + adenosine 3',5'-bisphosphate + H(+). Its function is as follows. Transfers the 4'-phosphopantetheine moiety from coenzyme A to a Ser of acyl-carrier-protein. The polypeptide is Holo-[acyl-carrier-protein] synthase (Burkholderia multivorans (strain ATCC 17616 / 249)).